A 269-amino-acid polypeptide reads, in one-letter code: METKQSIPLLMPYKMGPFNLSHRVVLAPLTRSRSYGNIPQPNAKLYYTQRTTPGGLLISESCVVSETSLGYPDLPGLWNRDQVEAWKPIVDAVHSKGGIFFCQIWHGGRVFHQDQPNGEAPVSSTDKPLMCKNMYGGQFKPPRRLRSDELPAIVNDFRIAARNAIEAGFDGVEVHGAHGYLIDQFLKDKVNDRSDQYGGSLENRCRFALEVIEAVVNEIGSDRVGIRLSPFADYMESGDSNPEALGLYLVQAMNKHGMESSTVTWLNLE.

Residues 28-30 (PLT) and Q103 each bind FMN. 175–178 (HGAH) contacts substrate. The Proton donor role is filled by Y180. FMN is bound at residue R227.

This sequence belongs to the NADH:flavin oxidoreductase/NADH oxidase family. Requires FMN as cofactor.

Its function is as follows. Putative oxophytodienoate reductase that may be involved in the biosynthesis or metabolism of oxylipin signaling molecules. The chain is Putative 12-oxophytodienoate reductase-like protein 2A from Arabidopsis thaliana (Mouse-ear cress).